A 951-amino-acid chain; its full sequence is Valine--tRNA ligase (951 aa).

A 'HIGH' region motif is present at residues 42–52 (PNVTGSLHMGH). A 'KMSKS' region motif is present at residues 554 to 558 (KMSKS). Lys-557 contributes to the ATP binding site. Residues 880-944 (AGLINKEDEL…AEAKAKLIEQ (65 aa)) are a coiled coil.

The protein belongs to the class-I aminoacyl-tRNA synthetase family. ValS type 1 subfamily. Monomer.

It localises to the cytoplasm. The enzyme catalyses tRNA(Val) + L-valine + ATP = L-valyl-tRNA(Val) + AMP + diphosphate. Functionally, catalyzes the attachment of valine to tRNA(Val). As ValRS can inadvertently accommodate and process structurally similar amino acids such as threonine, to avoid such errors, it has a 'posttransfer' editing activity that hydrolyzes mischarged Thr-tRNA(Val) in a tRNA-dependent manner. The sequence is that of Valine--tRNA ligase from Escherichia coli O6:H1 (strain CFT073 / ATCC 700928 / UPEC).